A 306-amino-acid chain; its full sequence is Ornithine carbamoyltransferase (306 aa).

Residues 53-56 (STRT), Q80, R104, and 131-134 (HPCQ) each bind carbamoyl phosphate. Residues N162, D219, and 223 to 224 (SM) contribute to the L-ornithine site. Residues 259–260 (CL) and R287 contribute to the carbamoyl phosphate site.

This sequence belongs to the aspartate/ornithine carbamoyltransferase superfamily. OTCase family.

Its subcellular location is the cytoplasm. It catalyses the reaction carbamoyl phosphate + L-ornithine = L-citrulline + phosphate + H(+). It participates in amino-acid biosynthesis; L-arginine biosynthesis; L-arginine from L-ornithine and carbamoyl phosphate: step 1/3. Reversibly catalyzes the transfer of the carbamoyl group from carbamoyl phosphate (CP) to the N(epsilon) atom of ornithine (ORN) to produce L-citrulline. This is Ornithine carbamoyltransferase from Pseudomonas syringae pv. tomato (strain ATCC BAA-871 / DC3000).